Consider the following 1442-residue polypeptide: Clustered mitochondria protein homolog (1442 aa).

2 disordered regions span residues 38-100 (NYRN…KKPD) and 237-258 (GRSE…KDRP). A compositionally biased stretch (basic and acidic residues) spans 82-100 (SEGEQQKDKTAAEDKKKPD). The Clu domain maps to 394–636 (RAEDTFSSKL…RTFPPDVNFL (243 aa)). Composition is skewed to basic and acidic residues over residues 696 to 714 (QKQE…EPKA) and 737 to 763 (ESKE…KVET). 2 disordered regions span residues 696-763 (QKQE…KVET) and 949-984 (SESD…SFQC). The span at 949 to 958 (SESDALTKSG) shows a compositional bias: polar residues. 3 TPR repeats span residues 1087–1120 (AYNF…LNNV), 1213–1246 (ALLD…NIKY), and 1248–1281 (GEKS…EKET). The segment at 1373 to 1442 (RQKEGGTSEQ…SSNASAQQVS (70 aa)) is disordered. The span at 1380-1390 (SEQAAAAQASQ) shows a compositional bias: low complexity. Polar residues predominate over residues 1424 to 1442 (ASSSKQADNSSNASAQQVS).

The protein belongs to the CLU family.

It is found in the cytoplasm. In terms of biological role, mRNA-binding protein involved in proper cytoplasmic distribution of mitochondria. This chain is Clustered mitochondria protein homolog, found in Aedes aegypti (Yellowfever mosquito).